The sequence spans 179 residues: Apoptosis regulator Bcl-2 homolog (179 aa).

Positions 76–95 match the BH1 motif; it reads ELFKDLINWGRICGFIVFSA. Positions 126–141 match the BH2 motif; that stretch reads PWMISHGGQEEFLAFS.

The protein belongs to the Bcl-2 family. As to quaternary structure, interacts with host BECN1 (via BH3 homology domain); this interaction allows the virus to inhibit BECN1, and thus autophagy. Interacts with host BID. Interacts with host BAX.

The protein resides in the host mitochondrion. It localises to the host endoplasmic reticulum. In terms of biological role, suppresses apoptosis in host cell to promote the viral replication. Has the ability to potentially bind to all the members of the proapoptotic Bcl-2 family. Inhibits autophagy by interacting with host Beclin 1 (BECN1). This chain is Apoptosis regulator Bcl-2 homolog, found in African swine fever virus (isolate Pig/Kenya/KEN-50/1950) (ASFV).